Reading from the N-terminus, the 502-residue chain is Lysine--tRNA ligase (502 aa).

Mg(2+)-binding residues include E412 and E419.

This sequence belongs to the class-II aminoacyl-tRNA synthetase family. In terms of assembly, homodimer. The cofactor is Mg(2+).

It is found in the cytoplasm. It catalyses the reaction tRNA(Lys) + L-lysine + ATP = L-lysyl-tRNA(Lys) + AMP + diphosphate. The polypeptide is Lysine--tRNA ligase (Buchnera aphidicola subsp. Cinara cedri (strain Cc)).